Reading from the N-terminus, the 305-residue chain is Homoserine O-succinyltransferase (305 aa).

The Acyl-thioester intermediate role is filled by cysteine 142. Substrate-binding residues include lysine 163 and serine 192. Histidine 235 (proton acceptor) is an active-site residue. Residue glutamate 237 is part of the active site. Residue arginine 249 coordinates substrate.

The protein belongs to the MetA family.

The protein resides in the cytoplasm. The enzyme catalyses L-homoserine + succinyl-CoA = O-succinyl-L-homoserine + CoA. It functions in the pathway amino-acid biosynthesis; L-methionine biosynthesis via de novo pathway; O-succinyl-L-homoserine from L-homoserine: step 1/1. Transfers a succinyl group from succinyl-CoA to L-homoserine, forming succinyl-L-homoserine. In Psychromonas ingrahamii (strain DSM 17664 / CCUG 51855 / 37), this protein is Homoserine O-succinyltransferase.